A 147-amino-acid polypeptide reads, in one-letter code: UPF0306 protein KPN78578_35330 (147 aa).

This sequence belongs to the UPF0306 family.

The chain is UPF0306 protein KPN78578_35330 from Klebsiella pneumoniae subsp. pneumoniae (strain ATCC 700721 / MGH 78578).